Consider the following 526-residue polypeptide: Peptide chain release factor 3 (526 aa).

In terms of domain architecture, tr-type G spans 8–277 (GKRRTFAIIS…GLTDWAPAPQ (270 aa)). GTP-binding positions include 17–24 (SHPDAGKT), 85–89 (DTPGH), and 139–142 (NKLD).

This sequence belongs to the TRAFAC class translation factor GTPase superfamily. Classic translation factor GTPase family. PrfC subfamily.

The protein localises to the cytoplasm. Increases the formation of ribosomal termination complexes and stimulates activities of RF-1 and RF-2. It binds guanine nucleotides and has strong preference for UGA stop codons. It may interact directly with the ribosome. The stimulation of RF-1 and RF-2 is significantly reduced by GTP and GDP, but not by GMP. The polypeptide is Peptide chain release factor 3 (Aliivibrio fischeri (strain MJ11) (Vibrio fischeri)).